Consider the following 632-residue polypeptide: MSTEPEGVESDSNADFAINASSFDYGMAHTSETLADPMSFQAQDLVVNLTGVERKVFVSARDDKDSLCNGVDFDADSDLLKNKDKKGFSKENLKLFDSDLVWAKLRSYPWWPGLVFDKSVASKAAMRHFKKGNVLVAYFGDCTFAWNNASQIKPFHQNFSQMQEQSNSAEFRDAIDCALDEVSRRVEFGLSCSCVSEEAYNKLKTQNIINAGIREDSSVRYGGDKLSDGISFEPAKLVDYMKHLACFPCYDATEKLQFVINRAQVLAFQQWKDYSHFIDYETFVRSVESAATLASLPEVNMDEGISAKKRKTDYKDNAEQTKEKTLSDLTVKKRCGSRSTEKLDGKSHSEKKRKVESSESGKSEKRIKKSQQKEDSVSKHSNEESLLSVGDTNKLQKTAEPCHGTGVENEMNSLTPTLKPCRASKSTEVENEKTKKPRHQELAERKISSPDEMLSSLHAANTSTGIPDSINIDPSNYEDFEKFINELFCSKLNGDSKKASITETSEPCDKKDSAEEEILPANKEITGSGSKEQIGLKDCSADSLPPYALVLNFADSGSVPSEEKLNEIFKRYGPLHESKTKVTMKGKRAKVVFKRGEDAKTAFSSAGKYSIFGPSLLSYRLEYVCPKRKKTT.

The 62-residue stretch at D97 to N158 folds into the PWWP domain. Residues R310–E452 are disordered. 4 stretches are compositionally biased toward basic and acidic residues: residues D313–L326, S339–E364, Q371–E383, and K425–S449. The Nuclear localization signal motif lies at K352–E359.

This sequence belongs to the PDP family. In terms of assembly, component of the PRC2 (polycomb repressive complex 2) complex which regulates histone methylation on histone H3K27.

Its subcellular location is the nucleus. In terms of biological role, may influence gene expression by regulating the function of the PRC2 complex and modulating H3K27me3 level. The chain is PWWP domain-containing protein 5 from Arabidopsis thaliana (Mouse-ear cress).